An 89-amino-acid polypeptide reads, in one-letter code: LYR motif-containing protein 4 (89 aa).

Belongs to the complex I LYR family.

The protein resides in the mitochondrion. Its subcellular location is the nucleus. It functions in the pathway cofactor biosynthesis; iron-sulfur cluster biosynthesis. Its function is as follows. Required for nuclear and mitochondrial iron-sulfur protein biosynthesis. The protein is LYR motif-containing protein 4 (lyrm4) of Danio rerio (Zebrafish).